The sequence spans 220 residues: MEMEHINENTIRVLIGNEDLADRGITFLDLLGNHKDVENFFYSILEEVDVEDEFQGSEAVTFQVLPKNDGLELFISKNVAMDDLSSLEGLSEVNADVSELIRKQIEADKAAADELDEMEATDETNRNVIFELDNFEAMIQLSKEVFMQSVLTNLYTYNDRYYLQVLFLTDELEKTNVDNEIAQILEFAHKTTVTQDTLVEYGTCIMERSALELTRYYFND.

It belongs to the MecA family. Homodimer.

Its function is as follows. Enables the recognition and targeting of unfolded and aggregated proteins to the ClpC protease or to other proteins involved in proteolysis. The chain is Adapter protein MecA from Enterococcus faecalis (strain ATCC 700802 / V583).